The sequence spans 145 residues: MSLLKTLAPKAGSKHAPKRIGRGIGSGMGGTATKGHKGQLARTGGTVRRGFEGGQTPLHRRLPKFGFSNVAFANNFEIVNVGQLAKFSGEVTPESLHAAGLISKGAVKILGNGELKTALTVKAHKFSESAKKAIEAAGGKVEVIK.

A disordered region spans residues 1 to 55 (MSLLKTLAPKAGSKHAPKRIGRGIGSGMGGTATKGHKGQLARTGGTVRRGFEGGQ). The span at 12–21 (GSKHAPKRIG) shows a compositional bias: basic residues. Positions 22-32 (RGIGSGMGGTA) are enriched in gly residues.

Belongs to the universal ribosomal protein uL15 family. Part of the 50S ribosomal subunit.

Its function is as follows. Binds to the 23S rRNA. The sequence is that of Large ribosomal subunit protein uL15 from Bdellovibrio bacteriovorus (strain ATCC 15356 / DSM 50701 / NCIMB 9529 / HD100).